The sequence spans 425 residues: Probable threonylcarbamoyladenosine tRNA methylthiotransferase (425 aa).

Residues valine 2–arginine 110 enclose the MTTase N-terminal domain. [4Fe-4S] cluster-binding residues include cysteine 11, cysteine 47, cysteine 76, cysteine 148, cysteine 152, and cysteine 155. The 231-residue stretch at leucine 133 to glutamate 363 folds into the Radical SAM core domain. Residues glutamine 366–serine 425 form the TRAM domain.

This sequence belongs to the methylthiotransferase family. CDKAL1 subfamily. It depends on [4Fe-4S] cluster as a cofactor.

It carries out the reaction N(6)-L-threonylcarbamoyladenosine(37) in tRNA + (sulfur carrier)-SH + AH2 + 2 S-adenosyl-L-methionine = 2-methylsulfanyl-N(6)-L-threonylcarbamoyladenosine(37) in tRNA + (sulfur carrier)-H + 5'-deoxyadenosine + L-methionine + A + S-adenosyl-L-homocysteine + 2 H(+). In terms of biological role, catalyzes the methylthiolation of N6-threonylcarbamoyladenosine (t(6)A), leading to the formation of 2-methylthio-N6-threonylcarbamoyladenosine (ms(2)t(6)A) at position 37 in tRNAs that read codons beginning with adenine. This chain is Probable threonylcarbamoyladenosine tRNA methylthiotransferase, found in Pyrococcus abyssi (strain GE5 / Orsay).